Reading from the N-terminus, the 190-residue chain is UPF0301 protein TC_0483 (190 aa).

The protein belongs to the UPF0301 (AlgH) family.

In Chlamydia muridarum (strain MoPn / Nigg), this protein is UPF0301 protein TC_0483.